The sequence spans 971 residues: Mating-type switching protein swi1 (971 aa).

3 positions are modified to phosphoserine: Ser-528, Ser-536, and Ser-970.

In terms of assembly, fork protection complex (FPC) consisting of swi1 and swi3 interacts with mat1 cis-acting sequences and mat1-proximal polar-terminator of replication (RTS1).

It localises to the nucleus. Functionally, forms a fork protection complex (FPC) with swi3. FPC coordinates leading and lagging strand synthesis and moves with the replication fork. It is required for programmed fork-pausing which is necessary for mating-type switching. FPC stabilizes replication forks in a configuration that is recognized by replication checkpoint sensors. It is involved in termination at the mat1-proximal polar-terminator of replication (RTS1) and also required for activation of the Rad53-like checkpoint kinase cds1. This chain is Mating-type switching protein swi1 (swi1), found in Schizosaccharomyces pombe (strain 972 / ATCC 24843) (Fission yeast).